The sequence spans 302 residues: Short-chain dehydrogenase/reductase 1 (302 aa).

Residues 20–23 (NKGL), Arg43, 71–72 (DV), and Asn98 contribute to the NADP(+) site. Residue Ser170 participates in substrate binding. Residues Tyr226, Lys230, and 257-262 (VKTDIN) each bind NADP(+). Catalysis depends on Tyr226, which acts as the Proton acceptor.

The protein belongs to the short-chain dehydrogenases/reductases (SDR) family. Mainly expressed in flowers and flower buds, to a lesser extent in leaves and, at low levels, in stems and roots.

Its pathway is secondary metabolite biosynthesis; terpenoid biosynthesis. Component of the oleanane-type triterpene saponins (e.g. saponarioside A and saponarioside B) biosynthetic pathway, leading to the production of natural products with detergent properties used as traditional sources of soap. A dehydrogenase/reductase that, together with UGT74CD1, mediates the conversion of QA-tri to QA-triF; UGT74CD1 may transfer 4-keto-6-deoxy-glucose to QA-tri, which is in turn reduced to D-fucose by SDR1, thus leading to QA-triF formation via the initiation of the C-28 sugar chain. This chain is Short-chain dehydrogenase/reductase 1, found in Saponaria officinalis (Common soapwort).